The following is a 211-amino-acid chain: Ribosomal RNA small subunit methyltransferase G (211 aa).

S-adenosyl-L-methionine-binding positions include Gly73, Phe78, 124–125 (VE), and Arg137.

Belongs to the methyltransferase superfamily. RNA methyltransferase RsmG family.

It is found in the cytoplasm. Its function is as follows. Specifically methylates the N7 position of a guanine in 16S rRNA. The polypeptide is Ribosomal RNA small subunit methyltransferase G (Christiangramia forsetii (strain DSM 17595 / CGMCC 1.15422 / KT0803) (Gramella forsetii)).